We begin with the raw amino-acid sequence, 626 residues long: Putative folylpolyglutamate synthase (626 aa).

Glycine 144–serine 147 serves as a coordination point for ATP. Serine 168, glutamate 235, and histidine 263 together coordinate Mg(2+). Positions 412 and 430 each coordinate ATP.

Belongs to the folylpolyglutamate synthase family.

The catalysed reaction is (6S)-5,6,7,8-tetrahydrofolyl-(gamma-L-Glu)(n) + L-glutamate + ATP = (6S)-5,6,7,8-tetrahydrofolyl-(gamma-L-Glu)(n+1) + ADP + phosphate + H(+). Its pathway is cofactor biosynthesis; tetrahydrofolylpolyglutamate biosynthesis. Its function is as follows. Conversion of folates to polyglutamate derivatives. This chain is Putative folylpolyglutamate synthase (folC), found in Dictyostelium discoideum (Social amoeba).